We begin with the raw amino-acid sequence, 145 residues long: D-aminoacyl-tRNA deacylase (145 aa).

Residues 137–138 (GP) carry the Gly-cisPro motif, important for rejection of L-amino acids motif.

Belongs to the DTD family. Homodimer.

The protein resides in the cytoplasm. The catalysed reaction is glycyl-tRNA(Ala) + H2O = tRNA(Ala) + glycine + H(+). It carries out the reaction a D-aminoacyl-tRNA + H2O = a tRNA + a D-alpha-amino acid + H(+). In terms of biological role, an aminoacyl-tRNA editing enzyme that deacylates mischarged D-aminoacyl-tRNAs. Also deacylates mischarged glycyl-tRNA(Ala), protecting cells against glycine mischarging by AlaRS. Acts via tRNA-based rather than protein-based catalysis; rejects L-amino acids rather than detecting D-amino acids in the active site. By recycling D-aminoacyl-tRNA to D-amino acids and free tRNA molecules, this enzyme counteracts the toxicity associated with the formation of D-aminoacyl-tRNA entities in vivo and helps enforce protein L-homochirality. The protein is D-aminoacyl-tRNA deacylase of Chromohalobacter salexigens (strain ATCC BAA-138 / DSM 3043 / CIP 106854 / NCIMB 13768 / 1H11).